Reading from the N-terminus, the 249-residue chain is MNQQHLLLDIEGTTCPVRFVSDTLFPFAKKELSRYITQNWDKRPHSKSIRAAWKEWMDDQSAESMIIKQQVTQCEIEEVEGLIQYLKHLISIDRKSTALKDLQGKIWEYGYGNGELKSQLFPETAVCLRQWHEQGLTLSVYSSGSIQAQKLLYRHSLNGNLEDLFSHWFDTHTGPKKSAESYTTIAKQLQSSPNKIWFVSDNGDECNSARLAGMHTLFSLREGNPDRDPRDHKVVHSLREVSALLIAEQ.

Belongs to the HAD-like hydrolase superfamily. MasA/MtnC family. Monomer. The cofactor is Mg(2+).

The catalysed reaction is 5-methylsulfanyl-2,3-dioxopentyl phosphate + H2O = 1,2-dihydroxy-5-(methylsulfanyl)pent-1-en-3-one + phosphate. It functions in the pathway amino-acid biosynthesis; L-methionine biosynthesis via salvage pathway; L-methionine from S-methyl-5-thio-alpha-D-ribose 1-phosphate: step 3/6. The protein operates within amino-acid biosynthesis; L-methionine biosynthesis via salvage pathway; L-methionine from S-methyl-5-thio-alpha-D-ribose 1-phosphate: step 4/6. Functionally, bifunctional enzyme that catalyzes the enolization of 2,3-diketo-5-methylthiopentyl-1-phosphate (DK-MTP-1-P) into the intermediate 2-hydroxy-3-keto-5-methylthiopentenyl-1-phosphate (HK-MTPenyl-1-P), which is then dephosphorylated to form the acireductone 1,2-dihydroxy-3-keto-5-methylthiopentene (DHK-MTPene). The protein is Enolase-phosphatase E1 of Synechococcus sp. (strain CC9605).